Here is a 202-residue protein sequence, read N- to C-terminus: LexA repressor (202 aa).

The segment at residues 28-48 is a DNA-binding region (H-T-H motif); that stretch reads RAEIAQRLGFRSPNAAEEHLK. Residues serine 119 and lysine 156 each act as for autocatalytic cleavage activity in the active site.

It belongs to the peptidase S24 family. Homodimer.

It catalyses the reaction Hydrolysis of Ala-|-Gly bond in repressor LexA.. Its function is as follows. Represses a number of genes involved in the response to DNA damage (SOS response), including recA and lexA. Binds to the 16 bp palindromic sequence 5'-CTGTATATATATACAG-3'. In the presence of single-stranded DNA, RecA interacts with LexA causing an autocatalytic cleavage which disrupts the DNA-binding part of LexA, leading to derepression of the SOS regulon and eventually DNA repair. This chain is LexA repressor, found in Enterobacter sp. (strain 638).